The sequence spans 176 residues: Shikimate kinase (176 aa).

Position 14–19 (14–19 (GAGKST)) interacts with ATP. Ser-18 is a Mg(2+) binding site. Substrate is bound by residues Asp-36, Arg-60, and Gly-83. Arg-121 contacts ATP. Position 140 (Arg-140) interacts with substrate.

The protein belongs to the shikimate kinase family. In terms of assembly, monomer. Mg(2+) serves as cofactor.

It is found in the cytoplasm. The catalysed reaction is shikimate + ATP = 3-phosphoshikimate + ADP + H(+). It functions in the pathway metabolic intermediate biosynthesis; chorismate biosynthesis; chorismate from D-erythrose 4-phosphate and phosphoenolpyruvate: step 5/7. Its function is as follows. Catalyzes the specific phosphorylation of the 3-hydroxyl group of shikimic acid using ATP as a cosubstrate. The protein is Shikimate kinase of Francisella tularensis subsp. tularensis (strain FSC 198).